A 138-amino-acid polypeptide reads, in one-letter code: Gap junction alpha-4 protein (138 aa).

The Cytoplasmic portion of the chain corresponds to 1–16 (DWGFLEKLLDQVQEHS). The chain crosses the membrane as a helical span at residues 17–39 (TVVGKIWLTVLFIFRILILGLAG). Topologically, residues 40-74 (ESVWGDEQSDFECNTAQPGCTNVCYDQAFPISHIP) are extracellular. A helical transmembrane segment spans residues 75-97 (YWVLQFLFVSTPTLVYLGHVIYL). Residues 98 to 138 (SRREERLRQKEGELRALPDKDPRVERALAGIERQMAKISVA) are Cytoplasmic-facing.

This sequence belongs to the connexin family. Alpha-type (group II) subfamily. A connexon is composed of a hexamer of connexins.

It localises to the cell membrane. It is found in the cell junction. Its subcellular location is the gap junction. Its function is as follows. One gap junction consists of a cluster of closely packed pairs of transmembrane channels, the connexons, through which materials of low MW diffuse from one cell to a neighboring cell. This Sus scrofa (Pig) protein is Gap junction alpha-4 protein (GJA4).